Here is a 282-residue protein sequence, read N- to C-terminus: Heme oxygenase 1, chloroplastic (282 aa).

The transit peptide at 1–54 directs the protein to the chloroplast; the sequence is MAYLAPISSSLSIFKNPQLSRFQFSSSSPNPLFLRPRIQILSMTMNKSPSLVVV. A heme b-binding site is contributed by H86.

The protein belongs to the heme oxygenase family. As to expression, widely expressed.

The protein resides in the plastid. Its subcellular location is the chloroplast. The enzyme catalyses heme b + 3 reduced [NADPH--hemoprotein reductase] + 3 O2 = biliverdin IXalpha + CO + Fe(2+) + 3 oxidized [NADPH--hemoprotein reductase] + 3 H2O + H(+). With respect to regulation, activated by ascorbate. Its function is as follows. Key enzyme in the synthesis of the chromophore of the phytochrome family of plant photoreceptors. Catalyzes the opening of the heme ring to form the open-chain tetrapyrrole biliverdin IX with the release of iron and carbon monoxide (CO). Produces specifically the biliverdin IX-alpha isomer. Can form complex with heme, is ferredoxin-dependent and its activity is increased in the presence of ascorbate. Plays a role in salt acclimation signaling. May affect the plastid-to-nucleus signaling pathway by perturbing tetrapyrrole synthesis. The plastid-to-nucleus signal plays an important role in the coordinated expression of both nuclear- and chloroplast-localized genes that encode photosynthesis-related proteins. The protein is Heme oxygenase 1, chloroplastic (HO1) of Arabidopsis thaliana (Mouse-ear cress).